The sequence spans 485 residues: Glutamyl-tRNA(Gln) amidotransferase subunit A (485 aa).

Residues Lys79 and Ser154 each act as charge relay system in the active site. Residue Ser178 is the Acyl-ester intermediate of the active site.

The protein belongs to the amidase family. GatA subfamily. In terms of assembly, heterotrimer of A, B and C subunits.

It catalyses the reaction L-glutamyl-tRNA(Gln) + L-glutamine + ATP + H2O = L-glutaminyl-tRNA(Gln) + L-glutamate + ADP + phosphate + H(+). In terms of biological role, allows the formation of correctly charged Gln-tRNA(Gln) through the transamidation of misacylated Glu-tRNA(Gln) in organisms which lack glutaminyl-tRNA synthetase. The reaction takes place in the presence of glutamine and ATP through an activated gamma-phospho-Glu-tRNA(Gln). This is Glutamyl-tRNA(Gln) amidotransferase subunit A from Clostridium botulinum (strain Loch Maree / Type A3).